A 263-amino-acid chain; its full sequence is LIM and SH3 domain protein 1 (263 aa).

Methionine 1 carries the N-acetylmethionine modification. The LIM zinc-binding domain maps to 3–63 (PNCARCGKIV…NAHYPKQSFT (61 aa)). The residue at position 42 (lysine 42) is an N6-acetyllysine. Nebulin repeat units lie at residues 64–95 (MVAD…KNKG) and 97–131 (GFSV…KSRM). Threonine 68 is modified (phosphothreonine). Position 75 is an N6-methyllysine (lysine 75). Serine 99 carries the post-translational modification Phosphoserine. Threonine 104 carries the phosphothreonine modification. Lysine 112 carries the N6-succinyllysine modification. A phosphoserine mark is found at serine 118 and serine 134. Residues 122 to 207 (YHEEFEKSRM…QRSAPGGGGK (86 aa)) are disordered. The span at 148–162 (DSSSYRRPTEQQQPQ) shows a compositional bias: polar residues. The SH3 domain occupies 204-263 (GGGKRYRAVYDYSAADEDEVSFQDGDTIVNVQQIDDGWMYGTVERTGDTGMLPANYVEAI).

Interacts with F-actin. Interacts with ANKRD54. Interacts with KBTBD10. Post-translationally, phosphorylated. Expressed in a wide range of tissues (but not the heart or skeletal muscle), the expression is specific for certain actin-rich cell types within these tissues. Expression is prominent in the cortical regions of ion-transporting duct cells in the pancreas, in the salivary parotid gland and in certain F-actin-rich cells in the distal tubule/collecting duct. In primary cultures of gastric fibroblasts, expression is mainly within the tips of lamellipodia and at the leading edges of membrane ruffles.

It localises to the cytoplasm. It is found in the cell cortex. Its subcellular location is the cytoskeleton. Its function is as follows. Plays an important role in the regulation of dynamic actin-based, cytoskeletal activities. Agonist-dependent changes in LASP1 phosphorylation may also serve to regulate actin-associated ion transport activities, not only in the parietal cell but also in certain other F-actin-rich secretory epithelial cell types. This Rattus norvegicus (Rat) protein is LIM and SH3 domain protein 1.